The primary structure comprises 175 residues: Homeobox expressed in ES cells 1 (175 aa).

The segment at 1-44 is disordered; that stretch reads MSPNLQEGARLVEGKPSSTSFSIESILGLDQKKDDAPSMKPHRP. Positions 108–167 form a DNA-binding region, homeobox; the sequence is GRRPRTAFTQNQVEVLENVFRVNCYPGIDIREDLARKLNLEEDRIQIWFQNRRAKLKRSH.

It belongs to the ANF homeobox family. As to quaternary structure, interacts with TLE1.

It localises to the nucleus. Functionally, required for the normal development of the forebrain, eyes and other anterior structures such as the olfactory placodes and pituitary gland. Possible transcriptional repressor. Binds to the palindromic PIII sequence, 5'-AGCTTGAGTCTAATTGAATTAACTGTAC-3'. The polypeptide is Homeobox expressed in ES cells 1 (HESX1) (Oryctolagus cuniculus (Rabbit)).